Consider the following 235-residue polypeptide: CMP-N,N'-diacetyllegionaminic acid synthase (235 aa).

Belongs to the CMP-NeuNAc synthase family.

It catalyses the reaction N,N-diacetyllegionaminate + CTP = CMP-N,N-diacetyllegionaminate + diphosphate. Its function is as follows. Involved in biosynthesis of legionaminic acid (5,7-diamino-3,5,7,9-tetradeoxy-D-glycero-D-galacto-non-2-ulosonic acid)(Leg), a sialic acid-like derivative that is incorporated into flagellin via O-linkage to Ser/Thr. Catalyzes the conversion of N,N'-diacetyllegionaminic acid (Leg5Ac7Ac) and CTP into CMP-N,N'-diacetyllegionaminic acid (CMP-Leg5Ac7Ac). The polypeptide is CMP-N,N'-diacetyllegionaminic acid synthase (legF) (Campylobacter jejuni subsp. jejuni serotype O:2 (strain ATCC 700819 / NCTC 11168)).